A 119-amino-acid polypeptide reads, in one-letter code: Beta-2-microglobulin (119 aa).

The first 20 residues, 1-20 (MARFVVVPLFVLLSLFGLEA), serve as a signal peptide directing secretion. One can recognise an Ig-like C1-type domain in the interval 25 to 114 (PKIQVYSRYP…VTFSTPKTVK (90 aa)). C45 and C100 are joined by a disulfide.

This sequence belongs to the beta-2-microglobulin family. Heterodimer of an alpha chain and a beta chain. Beta-2-microglobulin is the beta-chain of major histocompatibility complex class I molecules.

The protein resides in the secreted. In terms of biological role, component of the class I major histocompatibility complex (MHC). Involved in the presentation of peptide antigens to the immune system. The protein is Beta-2-microglobulin (B2M) of Saguinus niger (Black tamarin).